The chain runs to 625 residues: Endoglucanase 13 (625 aa).

The first 34 residues, 1–34, serve as a signal peptide directing secretion; that stretch reads MAATMNKTPATTFLLIPAAASLVLLLAAAASVEA. Catalysis depends on D91, which acts as the Nucleophile. H427 is an active-site residue. N-linked (GlcNAc...) asparagine glycosylation occurs at N440. Residues D479 and E488 contribute to the active site. The interval 509–530 is disordered; the sequence is ADNTPEYTPAPNAPSPSNGGSP.

The protein belongs to the glycosyl hydrolase 9 (cellulase E) family.

Its subcellular location is the secreted. It carries out the reaction Endohydrolysis of (1-&gt;4)-beta-D-glucosidic linkages in cellulose, lichenin and cereal beta-D-glucans.. This is Endoglucanase 13 (GLU6) from Oryza sativa subsp. indica (Rice).